Here is a 408-residue protein sequence, read N- to C-terminus: BTB/POZ and MATH domain-containing protein 3 (408 aa).

The MATH domain occupies 24 to 158 (NGSHQFTIQG…DDCLVINCTV (135 aa)). Positions 194–261 (CDIAFQVGDE…IYTDVLPNVH (68 aa)) constitute a BTB domain.

It belongs to the Tdpoz family. In terms of assembly, homodimer or heterodimer with BPM3 and BPM5. Interacts with CUL3A and CUL3B. Interacts with RAP2-4 and RAP2-13. Binds to MYB56 at the promoter of FLOWERING LOCUS T (FT). Ubiquitous.

It localises to the nucleus. Its subcellular location is the cytoplasm. Its pathway is protein modification; protein ubiquitination. Functionally, may act as a substrate-specific adapter of an E3 ubiquitin-protein ligase complex (CUL3-RBX1-BTB) which mediates the ubiquitination and subsequent proteasomal degradation of target proteins. The polypeptide is BTB/POZ and MATH domain-containing protein 3 (Arabidopsis thaliana (Mouse-ear cress)).